The primary structure comprises 547 residues: Eukaryotic translation initiation factor 3 subunit D (547 aa).

Disordered regions lie at residues 1-22 (MANFVLPPIHDNSDGSWGPSTS) and 114-159 (SVRG…TRDS). Residues 126–148 (GRGGQRGGFSTRGGRGGARGGYG) show a composition bias toward gly residues. Residues 284–298 (PLDYITVNENAADPP) are RNA gate.

It belongs to the eIF-3 subunit D family. In terms of assembly, component of the eukaryotic translation initiation factor 3 (eIF-3) complex.

It localises to the cytoplasm. MRNA cap-binding component of the eukaryotic translation initiation factor 3 (eIF-3) complex, which is involved in protein synthesis of a specialized repertoire of mRNAs and, together with other initiation factors, stimulates binding of mRNA and methionyl-tRNAi to the 40S ribosome. The eIF-3 complex specifically targets and initiates translation of a subset of mRNAs involved in cell proliferation. In the eIF-3 complex, eif3d specifically recognizes and binds the 7-methylguanosine cap of a subset of mRNAs. This chain is Eukaryotic translation initiation factor 3 subunit D, found in Cryptococcus neoformans var. neoformans serotype D (strain B-3501A) (Filobasidiella neoformans).